The chain runs to 298 residues: Tyrosine recombinase XerD (298 aa).

The region spanning 3-88 is the Core-binding (CB) domain; it reads ALDHPLIDQF…GLRGFFRYLL (86 aa). Residues 109 to 292 enclose the Tyr recombinase domain; it reads PLPKSLSEAD…AKARLQQLHA (184 aa). Residues arginine 149, lysine 173, histidine 244, arginine 247, and histidine 270 contribute to the active site. Residue tyrosine 279 is the O-(3'-phospho-DNA)-tyrosine intermediate of the active site.

It belongs to the 'phage' integrase family. XerD subfamily. As to quaternary structure, forms a cyclic heterotetrameric complex composed of two molecules of XerC and two molecules of XerD.

The protein localises to the cytoplasm. In terms of biological role, site-specific tyrosine recombinase, which acts by catalyzing the cutting and rejoining of the recombining DNA molecules. The XerC-XerD complex is essential to convert dimers of the bacterial chromosome into monomers to permit their segregation at cell division. It also contributes to the segregational stability of plasmids. The sequence is that of Tyrosine recombinase XerD from Pseudomonas putida (strain ATCC 47054 / DSM 6125 / CFBP 8728 / NCIMB 11950 / KT2440).